We begin with the raw amino-acid sequence, 559 residues long: NAD-dependent histone deacetylase SIR2 (559 aa).

The segment at 1 to 73 is disordered; it reads MSESASMLQG…NDHSAQEVAG (73 aa). The span at 39–51 shows a compositional bias: basic and acidic residues; the sequence is NDEKELLEATKAD. Positions 52–62 are enriched in acidic residues; it reads ELDEVVDDYAE. In terms of domain architecture, Deacetylase sirtuin-type spans 223–514; that stretch reads RLANFFTLDH…AFIAQKCGWD (292 aa). NAD(+) is bound by residues 248–267 and 330–333; these read GAGI…KGFY and QNID. Catalysis depends on His350, which acts as the Proton acceptor. Residues Cys358, Cys361, Cys382, and Cys385 each contribute to the Zn(2+) site. NAD(+) contacts are provided by residues 458–460, 483–485, and Cys500; these read GTS and NRD.

Belongs to the sirtuin family. Class I subfamily. The cofactor is Zn(2+).

It is found in the nucleus. The catalysed reaction is N(6)-acetyl-L-lysyl-[protein] + NAD(+) + H2O = 2''-O-acetyl-ADP-D-ribose + nicotinamide + L-lysyl-[protein]. Functionally, NAD-dependent deacetylase. Heterochromatin component that silences transcription at silent mating loci, telomeres and the ribosomal DNA, and that also suppresses recombination in the rDNA and extends replicative life span. It acts as a NAD-dependent histone deacetylase, which deacetylates 'Lys-9' and 'Lys-14' of Histone H3 and 'Lys-16' of Histone H4. In Eremothecium gossypii (strain ATCC 10895 / CBS 109.51 / FGSC 9923 / NRRL Y-1056) (Yeast), this protein is NAD-dependent histone deacetylase SIR2 (SIR2).